The primary structure comprises 315 residues: Aspartate carbamoyltransferase catalytic subunit (315 aa).

2 residues coordinate carbamoyl phosphate: Arg-55 and Thr-56. Lys-83 provides a ligand contact to L-aspartate. Residues Arg-105, His-138, and Gln-141 each coordinate carbamoyl phosphate. Arg-171 and Arg-225 together coordinate L-aspartate. Carbamoyl phosphate is bound by residues Gly-266 and Pro-267.

The protein belongs to the aspartate/ornithine carbamoyltransferase superfamily. ATCase family. In terms of assembly, heterododecamer (2C3:3R2) of six catalytic PyrB chains organized as two trimers (C3), and six regulatory PyrI chains organized as three dimers (R2).

It carries out the reaction carbamoyl phosphate + L-aspartate = N-carbamoyl-L-aspartate + phosphate + H(+). Its pathway is pyrimidine metabolism; UMP biosynthesis via de novo pathway; (S)-dihydroorotate from bicarbonate: step 2/3. Its function is as follows. Catalyzes the condensation of carbamoyl phosphate and aspartate to form carbamoyl aspartate and inorganic phosphate, the committed step in the de novo pyrimidine nucleotide biosynthesis pathway. This chain is Aspartate carbamoyltransferase catalytic subunit, found in Mycolicibacterium vanbaalenii (strain DSM 7251 / JCM 13017 / BCRC 16820 / KCTC 9966 / NRRL B-24157 / PYR-1) (Mycobacterium vanbaalenii).